Consider the following 114-residue polypeptide: Large ribosomal subunit protein bL19 (114 aa).

Belongs to the bacterial ribosomal protein bL19 family.

Its function is as follows. This protein is located at the 30S-50S ribosomal subunit interface and may play a role in the structure and function of the aminoacyl-tRNA binding site. This chain is Large ribosomal subunit protein bL19, found in Clostridium botulinum (strain ATCC 19397 / Type A).